The sequence spans 489 residues: Cytochrome P450 monooxygenase orf5 (489 aa).

A helical membrane pass occupies residues 13 to 35 (FVRLLAFHLIGLFVSITVYRLFF). 4 N-linked (GlcNAc...) asparagine glycosylation sites follow: asparagine 37, asparagine 118, asparagine 171, and asparagine 345. Cysteine 428 contributes to the heme binding site.

This sequence belongs to the cytochrome P450 family. The cofactor is heme.

It is found in the membrane. Its pathway is mycotoxin biosynthesis. In terms of biological role, cytochrome P450 monooxygenase; part of the gene cluster that mediates the biosynthesis of brefeldin A (BFA), a protein transport inhibitor that shows antiviral, antifungal, and antitumor properties. The proposed biosynthesis of BFA involves formation of an acyclic polyketide chain that is differentially tailored throughout the backbone. The highly reducing polyketide synthase Bref-PKS is proposed to synthesize the precisely reduced octaketide precursor, which could then be directly offloaded by the thiohydrolase enzyme Bref-TH followed by a cytochrome P450 monooxygenase-mediated formation of the cyclopentane ring and macrocyclization to afford 7-deoxy BFA. Alternatively, the first ring annulation can also occur on the ACP-tethered intermediate before the thiohydrolase release and lactonization. The C7-hydroxylation by another cytochrome P450 monooxygenase is believed to be the final step in the process to obtain the final structure of BFA. In addition to the HRPKS Bref-PKS and the thiohydrolase Bref-TH, the brefeldin A biosynthesis cluster contains 4 cytochrome p450 monooxygenases (called orf3 to orf6), as well a the probable cluster-specific transcription regulator orf8. This is Cytochrome P450 monooxygenase orf5 from Eupenicillium brefeldianum (Penicillium brefeldianum).